Here is a 545-residue protein sequence, read N- to C-terminus: Hyaluronidase PH-20 (545 aa).

A signal peptide spans 1-35 (MGVLKFKHIFFGSAVELSGVFQIVFIFLLIPCCLT). 2 disulfides stabilise this stretch: C60/C355 and C224/C239. Residue N82 is glycosylated (N-linked (GlcNAc...) asparagine). E148 acts as the Proton donor in catalysis. The N-linked (GlcNAc...) asparagine glycan is linked to N180. N372 carries an N-linked (GlcNAc...) asparagine glycan. 3 disulfides stabilise this stretch: C380–C391, C385–C439, and C441–C468.

Belongs to the glycosyl hydrolase 56 family. Testis.

It localises to the cell membrane. The enzyme catalyses Random hydrolysis of (1-&gt;4)-linkages between N-acetyl-beta-D-glucosamine and D-glucuronate residues in hyaluronate.. Functionally, involved in sperm-egg adhesion. Upon fertilization sperm must first penetrate a layer of cumulus cells that surrounds the egg before reaching the zona pellucida. The cumulus cells are embedded in a matrix containing hyaluronic acid which is formed prior to ovulation. This protein aids in penetrating the layer of cumulus cells by digesting hyaluronic acid. In Oryctolagus cuniculus (Rabbit), this protein is Hyaluronidase PH-20 (SPAM1).